We begin with the raw amino-acid sequence, 1162 residues long: Integrin alpha-L (1162 aa).

Residues 1-23 form the signal peptide; that stretch reads MSFRIAGPRLLLLGLQLFAKAWS. The Extracellular portion of the chain corresponds to 24-1088; that stretch reads YNLDTRPTQS…DLIHEKEMLH (1065 aa). FG-GAP repeat units follow at residues 28 to 79 and 80 to 138; these read TRPT…FCQP and VSLH…GPML. Cys70 and Cys77 are joined by a disulfide. Asn86 carries an N-linked (GlcNAc...) asparagine glycan. 2 disulfides stabilise this stretch: Cys108–Cys126 and Cys147–Cys199. A VWFA domain is found at 153 to 325; the sequence is DLVFLFDGSQ…EKLKDLFTDL (173 aa). N-linked (GlcNAc...) asparagine glycans are attached at residues Asn185 and Asn270. FG-GAP repeat units lie at residues 336–387, 390–443, 444–504, 505–561, and 565–625; these read NRQD…GATF, QEPL…GGRW, NQTQ…LFEM, VSEL…GLSP, and QRIQ…FSPE. N-linked (GlcNAc...) asparagine glycosylation is present at Asn444. Ca(2+) is bound by residues Asp466, Asp468, Asp470, Glu474, Asp528, Asn530, Asp532, Asp536, Asp588, Asp592, and Asp596. Cys651 and Cys705 are disulfide-bonded. N-linked (GlcNAc...) asparagine glycans are attached at residues Asn668, Asn696, Asn724, and Asn728. Cys768 and Cys774 are disulfide-bonded. Asn777 carries an N-linked (GlcNAc...) asparagine glycan. The cysteines at positions 841 and 857 are disulfide-linked. Residues Asn858, Asn881, Asn891, Asn900, and Asn928 are each glycosylated (N-linked (GlcNAc...) asparagine). 2 cysteine pairs are disulfide-bonded: Cys994-Cys1010 and Cys1018-Cys1049. Residue Asn1057 is glycosylated (N-linked (GlcNAc...) asparagine). A helical transmembrane segment spans residues 1089–1109; sequence VYVLSGIGGLVLLFLIFLALY. Residues 1110 to 1162 lie on the Cytoplasmic side of the membrane; it reads KVGFFKRNLKEKMEADGGVPNGSPPEDTDPLAVPGEETKDMGCLEPLRESDKD. Residues 1112-1116 carry the GFFKR motif motif; the sequence is GFFKR. Residues 1124–1162 are disordered; that stretch reads ADGGVPNGSPPEDTDPLAVPGEETKDMGCLEPLRESDKD. Basic and acidic residues predominate over residues 1145 to 1162; that stretch reads EETKDMGCLEPLRESDKD.

The protein belongs to the integrin alpha chain family. In terms of assembly, heterodimer of an alpha and a beta subunit. The ITGAL alpha subunit associates with the ITGB2 beta subunit. Interacts with THBD. Interacts with CD226. Post-translationally, in resting T-cells, up to 40% of surface ITGAL is constitutively phosphorylated. Phosphorylation causes conformational changes needed for ligand binding and is necessary for the activation by some physiological agents. In terms of tissue distribution, leukocytes.

The protein resides in the cell membrane. In terms of biological role, integrin ITGAL/ITGB2 is a receptor for ICAM1, ICAM2, ICAM3 and ICAM4. Integrin ITGAL/ITGB2 is a receptor for F11R. Integrin ITGAL/ITGB2 is a receptor for the secreted form of ubiquitin-like protein ISG15; the interaction is mediated by ITGAL. Involved in a variety of immune phenomena including leukocyte-endothelial cell interaction, cytotoxic T-cell mediated killing, and antibody dependent killing by granulocytes and monocytes. Contributes to natural killer cell cytotoxicity. Involved in leukocyte adhesion and transmigration of leukocytes including T-cells and neutrophils. Acts as a platform at the immunological synapse to translate TCR engagement and density of the ITGAL ligand ICAM1 into graded adhesion. Required for generation of common lymphoid progenitor cells in bone marrow, indicating the role in lymphopoiesis. Integrin ITGAL/ITGB2 in association with ICAM3, contributes to apoptotic neutrophil phagocytosis by macrophages. In Mus musculus (Mouse), this protein is Integrin alpha-L.